The primary structure comprises 559 residues: Mercuric reductase (559 aa).

The 64-residue stretch at 1-64 folds into the HMA domain; the sequence is MYLNITGMTC…AVAGLGYKAT (64 aa). A metal cation contacts are provided by C10 and C13. FAD-binding residues include A108, G128, and T133. A disulfide bridge connects residues C134 and C139. 4 residues coordinate FAD: K143, A209, D401, and V409. Hg(2+) contacts are provided by C556 and C557.

The protein belongs to the class-I pyridine nucleotide-disulfide oxidoreductase family. As to quaternary structure, homodimer. The cofactor is FAD.

It carries out the reaction Hg + NADP(+) + H(+) = Hg(2+) + NADPH. Functionally, resistance to Hg(2+) in bacteria appears to be governed by a specialized system which includes mercuric reductase. MerA protein is responsible for volatilizing mercury as Hg(0). The sequence is that of Mercuric reductase (merA) from Alcaligenes sp.